The primary structure comprises 83 residues: Small ribosomal subunit protein bS16 (83 aa).

The protein belongs to the bacterial ribosomal protein bS16 family.

The sequence is that of Small ribosomal subunit protein bS16 from Pseudomonas fluorescens (strain ATCC BAA-477 / NRRL B-23932 / Pf-5).